Consider the following 415-residue polypeptide: 4-hydroxy-3-methylbut-2-en-1-yl diphosphate synthase (flavodoxin) (415 aa).

[4Fe-4S] cluster-binding residues include cysteine 298, cysteine 301, cysteine 344, and glutamate 351.

It belongs to the IspG family. [4Fe-4S] cluster serves as cofactor.

It carries out the reaction (2E)-4-hydroxy-3-methylbut-2-enyl diphosphate + oxidized [flavodoxin] + H2O + 2 H(+) = 2-C-methyl-D-erythritol 2,4-cyclic diphosphate + reduced [flavodoxin]. Its pathway is isoprenoid biosynthesis; isopentenyl diphosphate biosynthesis via DXP pathway; isopentenyl diphosphate from 1-deoxy-D-xylulose 5-phosphate: step 5/6. In terms of biological role, converts 2C-methyl-D-erythritol 2,4-cyclodiphosphate (ME-2,4cPP) into 1-hydroxy-2-methyl-2-(E)-butenyl 4-diphosphate. This Solibacter usitatus (strain Ellin6076) protein is 4-hydroxy-3-methylbut-2-en-1-yl diphosphate synthase (flavodoxin).